The sequence spans 182 residues: uncharacterized protein (182 aa).

An N-terminal signal peptide occupies residues 1–29; that stretch reads MKKLLKKLVVLFLSSLVIIFNVWYFIICA. Residues 152–174 form a helical membrane-spanning segment; that stretch reads WNLYFWTAASYNAVIFVFVLVIV.

Its subcellular location is the membrane. This is an uncharacterized protein from Bacillus subtilis (strain 168).